A 217-amino-acid polypeptide reads, in one-letter code: 3,4-dihydroxy-2-butanone 4-phosphate synthase (217 aa).

D-ribulose 5-phosphate-binding positions include 37-38, aspartate 42, 150-154, and glutamate 174; these read RE and RRGHT. Glutamate 38 lines the Mg(2+) pocket. Histidine 153 provides a ligand contact to Mg(2+).

Belongs to the DHBP synthase family. In terms of assembly, homodimer. It depends on Mg(2+) as a cofactor. Requires Mn(2+) as cofactor.

It carries out the reaction D-ribulose 5-phosphate = (2S)-2-hydroxy-3-oxobutyl phosphate + formate + H(+). The protein operates within cofactor biosynthesis; riboflavin biosynthesis; 2-hydroxy-3-oxobutyl phosphate from D-ribulose 5-phosphate: step 1/1. Its function is as follows. Catalyzes the conversion of D-ribulose 5-phosphate to formate and 3,4-dihydroxy-2-butanone 4-phosphate. This chain is 3,4-dihydroxy-2-butanone 4-phosphate synthase, found in Shewanella sp. (strain MR-4).